Here is a 946-residue protein sequence, read N- to C-terminus: Villin-4 (946 aa).

Gelsolin-like repeat units lie at residues 28–109 (NFKP…ETEK), 152–219 (VHVK…EDGK), 274–339 (LEHE…TIMF), and 641–715 (EIHH…PQFF). 3 disordered regions span residues 744-789 (ATPS…GRSP), 801-832 (PSTR…SSKQ), and 844-902 (GPTK…PAPD). The segment covering 765 to 777 (QDKSQQRTRSMSH) has biased composition (polar residues). Over residues 874–883 (SENEPEDDEN) the composition is skewed to acidic residues. One can recognise an HP domain in the interval 881-946 (DENSTIYPYE…NRLKSDLQLF (66 aa)).

This sequence belongs to the villin/gelsolin family.

It localises to the cytoplasm. Its subcellular location is the cytoskeleton. Functionally, ca(2+)-regulated actin-binding protein. Binds actin microfilaments (MFs). Involved in actin filament bundling, severing and capping. Caps the barbed end of actin filaments and is able to sever them in a calcium-dependent manner. This chain is Villin-4, found in Oryza sativa subsp. japonica (Rice).